We begin with the raw amino-acid sequence, 372 residues long: 4-hydroxy-3-methylbut-2-en-1-yl diphosphate synthase (flavodoxin) (372 aa).

[4Fe-4S] cluster is bound by residues Cys-270, Cys-273, Cys-305, and Glu-312.

This sequence belongs to the IspG family. The cofactor is [4Fe-4S] cluster.

The enzyme catalyses (2E)-4-hydroxy-3-methylbut-2-enyl diphosphate + oxidized [flavodoxin] + H2O + 2 H(+) = 2-C-methyl-D-erythritol 2,4-cyclic diphosphate + reduced [flavodoxin]. It functions in the pathway isoprenoid biosynthesis; isopentenyl diphosphate biosynthesis via DXP pathway; isopentenyl diphosphate from 1-deoxy-D-xylulose 5-phosphate: step 5/6. In terms of biological role, converts 2C-methyl-D-erythritol 2,4-cyclodiphosphate (ME-2,4cPP) into 1-hydroxy-2-methyl-2-(E)-butenyl 4-diphosphate. This Salmonella schwarzengrund (strain CVM19633) protein is 4-hydroxy-3-methylbut-2-en-1-yl diphosphate synthase (flavodoxin).